The sequence spans 501 residues: ATP synthase subunit alpha (501 aa).

An ATP-binding site is contributed by 169–176 (GDRQTGKT).

It belongs to the ATPase alpha/beta chains family. As to quaternary structure, F-type ATPases have 2 components, CF(1) - the catalytic core - and CF(0) - the membrane proton channel. CF(1) has five subunits: alpha(3), beta(3), gamma(1), delta(1), epsilon(1). CF(0) has three main subunits: a(1), b(2) and c(9-12). The alpha and beta chains form an alternating ring which encloses part of the gamma chain. CF(1) is attached to CF(0) by a central stalk formed by the gamma and epsilon chains, while a peripheral stalk is formed by the delta and b chains.

It is found in the cell membrane. The enzyme catalyses ATP + H2O + 4 H(+)(in) = ADP + phosphate + 5 H(+)(out). Its function is as follows. Produces ATP from ADP in the presence of a proton gradient across the membrane. The alpha chain is a regulatory subunit. This Streptococcus uberis (strain ATCC BAA-854 / 0140J) protein is ATP synthase subunit alpha.